The chain runs to 189 residues: MKLFIVLVAGMPGAGKSIVSKAARDLGLPVYNMGDVIRMETSRLYGIITPETMRETSRRVRKLYGEDYVARKTIEQIKEKRGVIVVDGVRSLVEVEVFKKYAETVILAVHASPKTRFERIRKRNRPGDPDNWEDFVKRDLTELQFGLGNVIALADYMIVNEGSIEEAYRGAYNILKKLVEKNAKDNSDS.

Residue G10 to S17 coordinates ATP.

It belongs to the UPF0200 family.

The sequence is that of UPF0200 protein Smar_1234 from Staphylothermus marinus (strain ATCC 43588 / DSM 3639 / JCM 9404 / F1).